Here is a 331-residue protein sequence, read N- to C-terminus: Ketol-acid reductoisomerase (NADP(+)) (331 aa).

Positions 2–182 constitute a KARI N-terminal Rossmann domain; the sequence is ARMYYDADAN…GGTRAGILET (181 aa). Residues 25 to 28, S51, S53, and 83 to 86 each bind NADP(+); these read YGSQ and DEVQ. The active site involves H108. G134 contacts NADP(+). The KARI C-terminal knotted domain occupies 183-328; it reads SFREETETDL…KDLRAMFSWL (146 aa). Mg(2+) contacts are provided by D191, E195, E227, and E231. A substrate-binding site is contributed by S252.

It belongs to the ketol-acid reductoisomerase family. It depends on Mg(2+) as a cofactor.

It catalyses the reaction (2R)-2,3-dihydroxy-3-methylbutanoate + NADP(+) = (2S)-2-acetolactate + NADPH + H(+). It carries out the reaction (2R,3R)-2,3-dihydroxy-3-methylpentanoate + NADP(+) = (S)-2-ethyl-2-hydroxy-3-oxobutanoate + NADPH + H(+). The protein operates within amino-acid biosynthesis; L-isoleucine biosynthesis; L-isoleucine from 2-oxobutanoate: step 2/4. Its pathway is amino-acid biosynthesis; L-valine biosynthesis; L-valine from pyruvate: step 2/4. In terms of biological role, involved in the biosynthesis of branched-chain amino acids (BCAA). Catalyzes an alkyl-migration followed by a ketol-acid reduction of (S)-2-acetolactate (S2AL) to yield (R)-2,3-dihydroxy-isovalerate. In the isomerase reaction, S2AL is rearranged via a Mg-dependent methyl migration to produce 3-hydroxy-3-methyl-2-ketobutyrate (HMKB). In the reductase reaction, this 2-ketoacid undergoes a metal-dependent reduction by NADPH to yield (R)-2,3-dihydroxy-isovalerate. The chain is Ketol-acid reductoisomerase (NADP(+)) from Crocosphaera subtropica (strain ATCC 51142 / BH68) (Cyanothece sp. (strain ATCC 51142)).